Reading from the N-terminus, the 713-residue chain is Polyribonucleotide nucleotidyltransferase (713 aa).

The Mg(2+) site is built by Asp495 and Asp501. In terms of domain architecture, KH spans 562 to 621 (PRLLTLKIPVDMIGLVIGPGGKTIKRIVEETGAKVDIEDDGTVVVSSIDGAKALAAKQII). In terms of domain architecture, S1 motif spans 631-700 (DKVYLGTVTR…QKGRINLTRR (70 aa)).

It belongs to the polyribonucleotide nucleotidyltransferase family. It depends on Mg(2+) as a cofactor.

The protein localises to the cytoplasm. It carries out the reaction RNA(n+1) + phosphate = RNA(n) + a ribonucleoside 5'-diphosphate. Its function is as follows. Involved in mRNA degradation. Catalyzes the phosphorolysis of single-stranded polyribonucleotides processively in the 3'- to 5'-direction. The chain is Polyribonucleotide nucleotidyltransferase from Gloeobacter violaceus (strain ATCC 29082 / PCC 7421).